Here is a 163-residue protein sequence, read N- to C-terminus: Mediator of RNA polymerase II transcription subunit 10 (163 aa).

A disordered region spans residues 57–79 (AAPDPSYVQSPPSRTGLSPADPP). The span at 63–72 (YVQSPPSRTG) shows a compositional bias: polar residues.

It belongs to the Mediator complex subunit 10 family. In terms of assembly, component of the Mediator complex.

The protein localises to the nucleus. Component of the Mediator complex, a coactivator involved in the regulated transcription of nearly all RNA polymerase II-dependent genes. Mediator functions as a bridge to convey information from gene-specific regulatory proteins to the basal RNA polymerase II transcription machinery. Mediator is recruited to promoters by direct interactions with regulatory proteins and serves as a scaffold for the assembly of a functional preinitiation complex with RNA polymerase II and the general transcription factors. The chain is Mediator of RNA polymerase II transcription subunit 10 (NUT2) from Coccidioides immitis (strain RS) (Valley fever fungus).